Here is a 1460-residue protein sequence, read N- to C-terminus: MKYNNLENDDSDIHNNNNNNESEGDSLIELEEINLEGNNNNDINNNNNINNNNDSLDYENNKGSKKKNNKKYVILNEEEDINDKKVENGENETSSFTYGHDNEFKDLPLPKKGFGGLKSLEENANFLSSMTYLWADKFVLYCFKNILQLDEIWELASYDKSSYLFDIMDKNWQNELKNSKKPNFMKAAFKSFGKHFALSWVHFGLNVISQFIGPIFLKKIVSFVIQYRENPGSVDPNLGYYYALILFVNSMLGSIFLYQSNMITSRTGNRLKSLIVLYVYKKSLKLTNSSRSKKSNGEIVNLMSNDAQRLLELFQMVNTLIFAVPMIIVSMILLYDCVGWPSFVALLVMGISLPYSLNRGSQLSIYRRKLVGFTDQRIKVVNEMFQAIKTIKLYAWEDYFSQKMMSKRGEEIKFLTQFVRFRYSLIVVVQSIPTIISIFMFTVYYLVNSKLPADKIFAAVAYLNIIRVPFTFLPYGYNIYIQFKVSIERVVNFLNMDEINQGDDKNNEINVNVCDQQKQQQTDIGIYMDNTTFSWAIKPQTNPPPPRTTPSNDKSSPSGNNSNNEKKEVQVSFSLKNTSCQVKEKGSLLMVIGPVGSGKSSFCQALLGEMELENNGSLRVVGSIAYVSQSAWIMNASLKDNILFGKEYNKERYEMVLNCCALLPDLALFPQGDLIEIGERGINLSGGQKQRVAIARAVYSDSDIYILDDILSAVDAHVGKHLFYNCIKGILKEKIVVLATNQLNYCPYSTQTLILKTGGEVEQYDTFENIISTINSAYGNSSLFSELLKQYAHMAGDSDKDSDEIVDDEMIKSKENNNDLYDGKLTTIEEREEGSVSFKHYMYYVTAGGGFLFLIALLGYCIDTSTSTFTNWWLSNWSSKHTSTGINNNNSSSSNSISSSSSYIIDSLSSLNINEDGDIENAGEFLGVFIAIGVLTVLLIIVRTIVFFEYSIRATTEIHKRLFWSILRAPMWFFDTVPLGRILNRFTRDTDIVDMLLTNSLNQFLNFSTNCIAILVIISIATPWLLLPMTPIIILFYFIQYFYRRTSIQIQRIESITRSPIFSHFAETLNGVITLRAFRKMGENVLKNQALLDDNNKCYLTLQAMNQWLGLRLSVLGNLITLLSCIFITVDRSSIAIASVGLSISYTLSLTTNLNKATQQLAELETKMNSIERISYYTENVPQEPDQIIESNRPPMGWPSLTNSNHTPPIIFENVVMSYRQGLPAVLKGISFEIKAGEKIGICGRTGSGKSSLLLALFRIVELSSGRIIIDGLDISKIGLKDLRSQLAIIPQEPVMFTGTLRSNLDSLSEHTDSELWDVLKEIQLYEHVKKVSVADEGLDLRVNDNWSQGQKQLIGLGRALLKKPKILVCDEATASVDSLSDELIQRIIREKFKDAIILTIAHRLNTIVESDRIMVLDSGSIVEFNKPSILAQNENSLFNWLIDETGTQNSQYLRSLIKH.

Disordered stretches follow at residues 1 to 23 (MKYN…NESE) and 37 to 68 (GNNN…KKKN). Over residues 37 to 55 (GNNNNDINNNNNINNNNDS) the composition is skewed to low complexity. 5 helical membrane-spanning segments follow: residues 196–216 (FALS…GPIF), 238–258 (LGYY…IFLY), 320–340 (LIFA…CVGW), 425–445 (LIVV…TVYY), and 456–476 (IFAA…LPYG). Positions 196 to 482 (FALSWVHFGL…LPYGYNIYIQ (287 aa)) constitute an ABC transmembrane type-1 1 domain. Positions 537–567 (IKPQTNPPPPRTTPSNDKSSPSGNNSNNEKK) are disordered. The segment covering 551–563 (SNDKSSPSGNNSN) has biased composition (polar residues). One can recognise an ABC transporter 1 domain in the interval 560–783 (NNSNNEKKEV…INSAYGNSSL (224 aa)). 593–600 (GPVGSGKS) provides a ligand contact to ATP. Transmembrane regions (helical) follow at residues 842–862 (MYYV…GYCI), 922–942 (AGEF…LIIV), 1014–1034 (ILVI…PIII), and 1108–1128 (WLGL…CIFI). In terms of domain architecture, ABC transmembrane type-1 2 spans 853–1166 (FLIALLGYCI…ATQQLAELET (314 aa)). The region spanning 1210–1444 (IIFENVVMSY…ENSLFNWLID (235 aa)) is the ABC transporter 2 domain. Residue 1244 to 1251 (GRTGSGKS) coordinates ATP.

Belongs to the ABC transporter superfamily. ABCC family. Conjugate transporter (TC 3.A.1.208) subfamily.

It is found in the membrane. In Dictyostelium discoideum (Social amoeba), this protein is ABC transporter C family member 5 (abcC5).